Here is a 417-residue protein sequence, read N- to C-terminus: Metal-binding activator 1 (417 aa).

The copper-fist DNA-binding region spans 1-40 (MIIFNGNKYACASCIRGHRSSTCRHSHRMLIKVRTRGRPS). Residues Cys-11, Cys-14, Cys-23, and His-25 each coordinate Zn(2+). 2 disordered regions span residues 128–198 (FLRK…IFTP) and 216–242 (YNSS…AAPH). Ser-143 is subject to Phosphoserine. The segment covering 153-178 (SEKKERSRLQQEPIRHFSNCCKKDKS) has biased composition (basic and acidic residues). Composition is skewed to polar residues over residues 179–190 (QNPASNGKTNKA) and 228–238 (ETLTPQSTTTI). 2 repeat units span residues 264–279 (CSCE…CLIH) and 322–337 (CICP…CFSH). Positions 264 to 337 (CSCEDESCPC…NCTCDGCFSH (74 aa)) are 2 X 16 AA repeat of C-X-C-X(4)-C-X-C-X-X-C-X-X-H.

It localises to the nucleus. Regulatory protein involved in Cu/Fe utilization and stress resistance. Involved in basal level transcription of FRE1 and H(2)O(2)-induced transcription of CTT1. Regulates the transcription of CTR1 and CTR3 via the copper ion responsive elements in their promoters. Required for degradation of CTR1. The sequence is that of Metal-binding activator 1 (MAC1) from Saccharomyces cerevisiae (strain ATCC 204508 / S288c) (Baker's yeast).